The sequence spans 205 residues: Thymidylate kinase (205 aa).

9–16 (GPEGSGKT) contacts ATP.

Belongs to the thymidylate kinase family.

It catalyses the reaction dTMP + ATP = dTDP + ADP. Functionally, phosphorylation of dTMP to form dTDP in both de novo and salvage pathways of dTTP synthesis. This is Thymidylate kinase from Staphylococcus aureus (strain MSSA476).